The chain runs to 854 residues: Protein translocase subunit SecA (854 aa).

Residues Gln89, 107–111 (GEGKT), and Asp501 contribute to the ATP site.

This sequence belongs to the SecA family. Monomer and homodimer. Part of the essential Sec protein translocation apparatus which comprises SecA, SecYEG and auxiliary proteins SecDF-YajC and YidC.

The protein resides in the cell inner membrane. Its subcellular location is the cytoplasm. The catalysed reaction is ATP + H2O + cellular proteinSide 1 = ADP + phosphate + cellular proteinSide 2.. In terms of biological role, part of the Sec protein translocase complex. Interacts with the SecYEG preprotein conducting channel. Has a central role in coupling the hydrolysis of ATP to the transfer of proteins into and across the cell membrane, serving both as a receptor for the preprotein-SecB complex and as an ATP-driven molecular motor driving the stepwise translocation of polypeptide chains across the membrane. This is Protein translocase subunit SecA from Pelagibacter ubique (strain HTCC1062).